Consider the following 198-residue polypeptide: MSSRDRGSPSSSSSSSSLPGIEKYNEKVKNQIQALVRVIKVARTYRDDNVPSLIEQGLYLGSVAAASNKNVLKSYNVTHILTVASSLRPAHPDDFVYKVVRVVDKEDTNLEMYFDECVDFIDEAKRQGGSVLVHCFVGKSRSVTIVVAYLMKKHGMTLAQALQHVKSKRPVASPNAGFIRQLQDLEKSMQVSDQFFSF.

The tract at residues 1 to 20 (MSSRDRGSPSSSSSSSSLPG) is disordered. A compositionally biased stretch (low complexity) spans 8–17 (SPSSSSSSSS). Positions 26–47 (EKVKNQIQALVRVIKVARTYRD) are caM binding domain 1. Residues 50 to 191 (VPSLIEQGLY…LQDLEKSMQV (142 aa)) form the Tyrosine-protein phosphatase domain. Catalysis depends on Cys-135, which acts as the Phosphocysteine intermediate. Residues 151–180 (MKKHGMTLAQALQHVKSKRPVASPNAGFIR) are caM binding domain 2.

This sequence belongs to the protein-tyrosine phosphatase family. Non-receptor class dual specificity subfamily. As to quaternary structure, interacts with calmodulin (CaM) in a calcium Ca(2+)-dependent manner. As to expression, expressed in roots, stems, leaves and flowers.

Its subcellular location is the nucleus. It is found in the cytoplasm. The catalysed reaction is O-phospho-L-tyrosyl-[protein] + H2O = L-tyrosyl-[protein] + phosphate. It catalyses the reaction O-phospho-L-seryl-[protein] + H2O = L-seryl-[protein] + phosphate. It carries out the reaction O-phospho-L-threonyl-[protein] + H2O = L-threonyl-[protein] + phosphate. With respect to regulation, inhibited by sodium vanadate and sodium tungstate. NaF and spermifine repress specifically phosphoserine and phosphothreonine phosphatase activity. Its function is as follows. Has a dual specificity toward Ser/Thr and Tyr-containing proteins. Dephosphorylates MPK4 in vitro. The sequence is that of Dual specificity protein phosphatase 1 (DSPTP1) from Arabidopsis thaliana (Mouse-ear cress).